The primary structure comprises 337 residues: Methylthioribose-1-phosphate isomerase (337 aa).

Substrate contacts are provided by residues R47–A49, R81, and Q184. The active-site Proton donor is D225. A substrate-binding site is contributed by N235–K236.

The protein belongs to the eIF-2B alpha/beta/delta subunits family. MtnA subfamily.

It carries out the reaction 5-(methylsulfanyl)-alpha-D-ribose 1-phosphate = 5-(methylsulfanyl)-D-ribulose 1-phosphate. The protein operates within amino-acid biosynthesis; L-methionine biosynthesis via salvage pathway; L-methionine from S-methyl-5-thio-alpha-D-ribose 1-phosphate: step 1/6. In terms of biological role, catalyzes the interconversion of methylthioribose-1-phosphate (MTR-1-P) into methylthioribulose-1-phosphate (MTRu-1-P). The sequence is that of Methylthioribose-1-phosphate isomerase from Synechococcus sp. (strain CC9605).